Consider the following 227-residue polypeptide: Cytochrome c oxidase subunit 2 (227 aa).

Over 1–14 (MAYPVQLGFQDAAS) the chain is Mitochondrial intermembrane. A helical membrane pass occupies residues 15–45 (PIMEELLYFHDHTLMIMFLISSLVLYIISLM). At 46–59 (LTTELIHTSTMDAQ) the chain is on the mitochondrial matrix side. Residues 60–87 (EVETVWTILPAVILILIALPSLRILYMM) traverse the membrane as a helical segment. The Mitochondrial intermembrane portion of the chain corresponds to 88–227 (DEISTPSLTL…HFEEWLLSML (140 aa)). Residues H161, C196, E198, C200, H204, and M207 each coordinate Cu cation. E198 serves as a coordination point for Mg(2+).

The protein belongs to the cytochrome c oxidase subunit 2 family. Component of the cytochrome c oxidase (complex IV, CIV), a multisubunit enzyme composed of 14 subunits. The complex is composed of a catalytic core of 3 subunits MT-CO1, MT-CO2 and MT-CO3, encoded in the mitochondrial DNA, and 11 supernumerary subunits COX4I, COX5A, COX5B, COX6A, COX6B, COX6C, COX7A, COX7B, COX7C, COX8 and NDUFA4, which are encoded in the nuclear genome. The complex exists as a monomer or a dimer and forms supercomplexes (SCs) in the inner mitochondrial membrane with NADH-ubiquinone oxidoreductase (complex I, CI) and ubiquinol-cytochrome c oxidoreductase (cytochrome b-c1 complex, complex III, CIII), resulting in different assemblies (supercomplex SCI(1)III(2)IV(1) and megacomplex MCI(2)III(2)IV(2)). Found in a complex with TMEM177, COA6, COX18, COX20, SCO1 and SCO2. Interacts with TMEM177 in a COX20-dependent manner. Interacts with COX20. Interacts with COX16. It depends on Cu cation as a cofactor.

Its subcellular location is the mitochondrion inner membrane. The enzyme catalyses 4 Fe(II)-[cytochrome c] + O2 + 8 H(+)(in) = 4 Fe(III)-[cytochrome c] + 2 H2O + 4 H(+)(out). Component of the cytochrome c oxidase, the last enzyme in the mitochondrial electron transport chain which drives oxidative phosphorylation. The respiratory chain contains 3 multisubunit complexes succinate dehydrogenase (complex II, CII), ubiquinol-cytochrome c oxidoreductase (cytochrome b-c1 complex, complex III, CIII) and cytochrome c oxidase (complex IV, CIV), that cooperate to transfer electrons derived from NADH and succinate to molecular oxygen, creating an electrochemical gradient over the inner membrane that drives transmembrane transport and the ATP synthase. Cytochrome c oxidase is the component of the respiratory chain that catalyzes the reduction of oxygen to water. Electrons originating from reduced cytochrome c in the intermembrane space (IMS) are transferred via the dinuclear copper A center (CU(A)) of subunit 2 and heme A of subunit 1 to the active site in subunit 1, a binuclear center (BNC) formed by heme A3 and copper B (CU(B)). The BNC reduces molecular oxygen to 2 water molecules using 4 electrons from cytochrome c in the IMS and 4 protons from the mitochondrial matrix. In Eulemur macaco (Black lemur), this protein is Cytochrome c oxidase subunit 2 (MT-CO2).